The sequence spans 128 residues: Large ribosomal subunit protein bL12 (128 aa).

Belongs to the bacterial ribosomal protein bL12 family. As to quaternary structure, homodimer. Part of the ribosomal stalk of the 50S ribosomal subunit. Forms a multimeric L10(L12)X complex, where L10 forms an elongated spine to which 2 to 4 L12 dimers bind in a sequential fashion. Binds GTP-bound translation factors.

Its function is as follows. Forms part of the ribosomal stalk which helps the ribosome interact with GTP-bound translation factors. Is thus essential for accurate translation. This is Large ribosomal subunit protein bL12 from Sorangium cellulosum (strain So ce56) (Polyangium cellulosum (strain So ce56)).